A 596-amino-acid polypeptide reads, in one-letter code: Arginine--tRNA ligase (596 aa).

Residues 128 to 138 (ANPTSSLHVGH) carry the 'HIGH' region motif.

Belongs to the class-I aminoacyl-tRNA synthetase family. In terms of assembly, monomer.

The protein resides in the cytoplasm. The catalysed reaction is tRNA(Arg) + L-arginine + ATP = L-arginyl-tRNA(Arg) + AMP + diphosphate. The protein is Arginine--tRNA ligase of Acinetobacter baylyi (strain ATCC 33305 / BD413 / ADP1).